An 86-amino-acid polypeptide reads, in one-letter code: Small ribosomal subunit protein uS17 (86 aa).

Belongs to the universal ribosomal protein uS17 family. As to quaternary structure, part of the 30S ribosomal subunit.

In terms of biological role, one of the primary rRNA binding proteins, it binds specifically to the 5'-end of 16S ribosomal RNA. This is Small ribosomal subunit protein uS17 from Marinomonas sp. (strain MWYL1).